The sequence spans 106 residues: Large ribosomal subunit protein P2 (106 aa).

The tract at residues 80–106 (AAAAPAKKVVEEKKEESDDDMGMGLFD) is disordered.

The protein belongs to the eukaryotic ribosomal protein P1/P2 family. In terms of assembly, P1 and P2 exist as dimers at the large ribosomal subunit. Post-translationally, phosphorylated.

Functionally, plays an important role in the elongation step of protein synthesis. The polypeptide is Large ribosomal subunit protein P2 (rplp2) (Dictyostelium discoideum (Social amoeba)).